Reading from the N-terminus, the 289-residue chain is Ferri-bacillibactin esterase BesA (289 aa).

Active-site charge relay system residues include serine 163, glutamate 225, and histidine 263.

It belongs to the esterase D family.

Its subcellular location is the cytoplasm. Catalyzes the hydrolysis of the trilactone cycle of ferri-bacillibactin (ferri-BB) complex, leading to the formation of bacillibactin monomers and to cytosolic iron release, thus making iron available for metabolic use. Can also hydrolyze bacillibactin (BB), however the catalytic efficiency for ferri-BB hydrolysis is much higher than for BB. The protein is Ferri-bacillibactin esterase BesA (besA) of Bacillus subtilis (strain 168).